The chain runs to 506 residues: Alpha-L-fucosidase 1 (506 aa).

An N-terminal signal peptide occupies residues Met1–Ser23. N-linked (GlcNAc...) asparagine glycosylation is found at Asn22, Asn82, Asn248, Asn320, Asn355, and Asn487.

The protein belongs to the glycosyl hydrolase 29 family.

The protein resides in the secreted. It is found in the extracellular space. The protein localises to the apoplast. The catalysed reaction is an alpha-L-fucoside + H2O = L-fucose + an alcohol. Functionally, hydrolyzes both 3- and 4-linked fucoses in Lewis determinants. Not active on neither 2-linked fucose nor on fucose in alpha-1,3-linkage to the innermost GlcNAc. This Arabidopsis thaliana (Mouse-ear cress) protein is Alpha-L-fucosidase 1 (FUC1).